The primary structure comprises 330 residues: Delta-aminolevulinic acid dehydratase (330 aa).

C122, C124, H131, and C132 together coordinate Zn(2+). The active-site Schiff-base intermediate with substrate is K199. K199 is subject to N6-succinyllysine. R209 contributes to the 5-aminolevulinate binding site. At S215 the chain carries Phosphoserine. R221 is a 5-aminolevulinate binding site. Position 223 (C223) interacts with Zn(2+). Residue K252 is the Schiff-base intermediate with substrate of the active site. K252 is modified (N6-succinyllysine). Residue S279 participates in 5-aminolevulinate binding.

It belongs to the ALAD family. In terms of assembly, homooctamer; active form. Homohexamer; low activity form. It depends on Zn(2+) as a cofactor.

It is found in the cytoplasm. It localises to the cytosol. It catalyses the reaction 2 5-aminolevulinate = porphobilinogen + 2 H2O + H(+). It functions in the pathway porphyrin-containing compound metabolism; protoporphyrin-IX biosynthesis; coproporphyrinogen-III from 5-aminolevulinate: step 1/4. Its activity is regulated as follows. Can alternate between a fully active homooctamer and a low-activity homohexamer. A bound magnesium ion may promote the assembly of the fully active homooctamer. The magnesium-binding site is absent in the low-activity homohexamer. Inhibited by compounds that favor the hexameric state. Inhibited by divalent lead ions. The lead ions partially displace the zinc cofactor. In terms of biological role, catalyzes an early step in the biosynthesis of tetrapyrroles. Binds two molecules of 5-aminolevulinate per subunit, each at a distinct site, and catalyzes their condensation to form porphobilinogen. In Pongo abelii (Sumatran orangutan), this protein is Delta-aminolevulinic acid dehydratase (ALAD).